The following is a 463-amino-acid chain: MTIGLSVTNDVFARDILTVAQLNQAVGQLLERSIPSLWVRGEISNFTQAASGHWYFTLKDSRAAVRTVMFRSRAAQVGFVPRPGDQVEVRARVSLYEPRGDYQLQADGMRRAGVGNLYEAFLRLKAQLQDEGLFDPQRKRQPARLPRAIGVVTSLHAAALRDVLSALARRAPQVPVIIYPAPVQGADAAARLAARVAQANQRAEVDTLLLVRGGGSIEDLWSFNDEALAREVAASDIPVISGVGHETDFTIVDFVADLRAPTPTAAAELACVPRGDLLAALRHTAEWLARAQQRRLDQAAQRLDRAAAMLTSPAQRLAHQQERLNTLRHRLASAWRGPQGHRVARLDMLAQRLAHRRPDTGRAAERSAALLAQLGRAQARLAAARQARLDTLAAQLRALDPQHTLARGYAIVRDAAGAIVTDATRLAARDRIEIAVARGRIGADVTDIGTPDGTDGNPALRRG.

The protein belongs to the XseA family. As to quaternary structure, heterooligomer composed of large and small subunits.

Its subcellular location is the cytoplasm. It carries out the reaction Exonucleolytic cleavage in either 5'- to 3'- or 3'- to 5'-direction to yield nucleoside 5'-phosphates.. Its function is as follows. Bidirectionally degrades single-stranded DNA into large acid-insoluble oligonucleotides, which are then degraded further into small acid-soluble oligonucleotides. This Bordetella pertussis (strain Tohama I / ATCC BAA-589 / NCTC 13251) protein is Exodeoxyribonuclease 7 large subunit.